The following is a 104-amino-acid chain: L-rhamnose mutarotase (104 aa).

A substrate-binding site is contributed by Tyr-18. The active-site Proton donor is His-22. Substrate-binding positions include Tyr-41 and 76-77 (WW).

Belongs to the rhamnose mutarotase family. As to quaternary structure, homodimer.

It is found in the cytoplasm. The enzyme catalyses alpha-L-rhamnose = beta-L-rhamnose. It participates in carbohydrate metabolism; L-rhamnose metabolism. Its function is as follows. Involved in the anomeric conversion of L-rhamnose. This Jannaschia sp. (strain CCS1) protein is L-rhamnose mutarotase.